The sequence spans 342 residues: L-threonine 3-dehydrogenase (342 aa).

Cys-38 is a binding site for Zn(2+). Residues Thr-40 and His-43 each act as charge relay system in the active site. Zn(2+)-binding residues include His-63, Glu-64, Cys-93, Cys-96, Cys-99, and Cys-107. NAD(+) contacts are provided by residues Ile-175, Asp-195, Arg-200, 262 to 264 (LGL), and 286 to 287 (IY).

It belongs to the zinc-containing alcohol dehydrogenase family. As to quaternary structure, homotetramer. The cofactor is Zn(2+).

It localises to the cytoplasm. It carries out the reaction L-threonine + NAD(+) = (2S)-2-amino-3-oxobutanoate + NADH + H(+). It functions in the pathway amino-acid degradation; L-threonine degradation via oxydo-reductase pathway; glycine from L-threonine: step 1/2. Catalyzes the NAD(+)-dependent oxidation of L-threonine to 2-amino-3-ketobutyrate. This is L-threonine 3-dehydrogenase from Streptomyces coelicolor (strain ATCC BAA-471 / A3(2) / M145).